Here is a 692-residue protein sequence, read N- to C-terminus: UvrABC system protein B (692 aa).

The Helicase ATP-binding domain maps to 32–418 (DNIENGEKAQ…QTDTIVEQII (387 aa)). 45-52 (GATGTGKT) contributes to the ATP binding site. The Beta-hairpin motif lies at 98 to 121 (YYDYYQPEAYVPSSDTYIEKDSSV). In terms of domain architecture, Helicase C-terminal spans 436–631 (QIDDLVGEIH…TIKKEIRDLI (196 aa)). The region spanning 656-691 (KALVKKLEKEMQQAASALDFEGAAQLRDMVLELRAM) is the UVR domain.

Belongs to the UvrB family. In terms of assembly, forms a heterotetramer with UvrA during the search for lesions. Interacts with UvrC in an incision complex.

The protein resides in the cytoplasm. In terms of biological role, the UvrABC repair system catalyzes the recognition and processing of DNA lesions. A damage recognition complex composed of 2 UvrA and 2 UvrB subunits scans DNA for abnormalities. Upon binding of the UvrA(2)B(2) complex to a putative damaged site, the DNA wraps around one UvrB monomer. DNA wrap is dependent on ATP binding by UvrB and probably causes local melting of the DNA helix, facilitating insertion of UvrB beta-hairpin between the DNA strands. Then UvrB probes one DNA strand for the presence of a lesion. If a lesion is found the UvrA subunits dissociate and the UvrB-DNA preincision complex is formed. This complex is subsequently bound by UvrC and the second UvrB is released. If no lesion is found, the DNA wraps around the other UvrB subunit that will check the other stand for damage. The polypeptide is UvrABC system protein B (Lactococcus lactis subsp. lactis (strain IL1403) (Streptococcus lactis)).